The sequence spans 245 residues: Biosynthetic peptidoglycan transglycosylase (245 aa).

Residues 29–49 (IVLAVLIVLILPYALIVFYLL) traverse the membrane as a helical segment.

It belongs to the glycosyltransferase 51 family.

It localises to the cell inner membrane. It catalyses the reaction [GlcNAc-(1-&gt;4)-Mur2Ac(oyl-L-Ala-gamma-D-Glu-L-Lys-D-Ala-D-Ala)](n)-di-trans,octa-cis-undecaprenyl diphosphate + beta-D-GlcNAc-(1-&gt;4)-Mur2Ac(oyl-L-Ala-gamma-D-Glu-L-Lys-D-Ala-D-Ala)-di-trans,octa-cis-undecaprenyl diphosphate = [GlcNAc-(1-&gt;4)-Mur2Ac(oyl-L-Ala-gamma-D-Glu-L-Lys-D-Ala-D-Ala)](n+1)-di-trans,octa-cis-undecaprenyl diphosphate + di-trans,octa-cis-undecaprenyl diphosphate + H(+). The protein operates within cell wall biogenesis; peptidoglycan biosynthesis. Peptidoglycan polymerase that catalyzes glycan chain elongation from lipid-linked precursors. This chain is Biosynthetic peptidoglycan transglycosylase, found in Rhizobium johnstonii (strain DSM 114642 / LMG 32736 / 3841) (Rhizobium leguminosarum bv. viciae).